A 407-amino-acid chain; its full sequence is Na(+)-translocating NADH-quinone reductase subunit F (407 aa).

Residues 6-26 form a helical membrane-spanning segment; sequence IFLAIGMFTAIVLGLVAIILV. In terms of domain architecture, 2Fe-2S ferredoxin-type spans 35 to 127; that stretch reads GDVTIQINGE…DMQIRVPEEV (93 aa). The [2Fe-2S] cluster site is built by cysteine 70, cysteine 76, cysteine 79, and cysteine 111. In terms of domain architecture, FAD-binding FR-type spans 130-269; that stretch reads VKKWECTVES…YGPFGEFFAK (140 aa). Residues 272–389 are catalytic; it reads EAEMVFIGGG…PMMNAAVIKM (118 aa).

Belongs to the NqrF family. Composed of six subunits; NqrA, NqrB, NqrC, NqrD, NqrE and NqrF. [2Fe-2S] cluster serves as cofactor. The cofactor is FAD.

It is found in the cell inner membrane. The catalysed reaction is a ubiquinone + n Na(+)(in) + NADH + H(+) = a ubiquinol + n Na(+)(out) + NAD(+). Functionally, NQR complex catalyzes the reduction of ubiquinone-1 to ubiquinol by two successive reactions, coupled with the transport of Na(+) ions from the cytoplasm to the periplasm. The first step is catalyzed by NqrF, which accepts electrons from NADH and reduces ubiquinone-1 to ubisemiquinone by a one-electron transfer pathway. This is Na(+)-translocating NADH-quinone reductase subunit F from Pseudomonas aeruginosa (strain ATCC 15692 / DSM 22644 / CIP 104116 / JCM 14847 / LMG 12228 / 1C / PRS 101 / PAO1).